The chain runs to 416 residues: MSKRRVAADLPSGTNSSMPVQRHRVSSLRGTHSPSSLDSPPASRTSAVGSLVRAPGVYVGVAPSGGIGGLGARVTRRALGISSVFLQGLRSSGLANVPAPGPERDHTTVEDLGGCLVEYMTKVHALEQVSQELETQLRAHLESKAKSSGGWDALRASWASSYQQVGEAVLENARLLLQMETIQAGADDFKERYENEQPFRKAAEEEVSSLYKVIDEANLTKTDLEHQIESLKEELGFLSRSYEEDVKVLYKQLAGSELEQADVPMGTGLDDVLETIRVQWERDVEKNRAEAGALLQAKQQTEVVHVSQTQEEKLAAALSVELHDTSRQVQSLQAETESLRALKRGLENSLHDAQHWHDMELQNLGAVVGRLEAELAEIRSETEQQQQERAHLLACKSQLQKDVASYHALLDREENN.

A disordered region spans residues 1 to 48; that stretch reads MSKRRVAADLPSGTNSSMPVQRHRVSSLRGTHSPSSLDSPPASRTSAV. The residue at position 2 (Ser-2) is an N-acetylserine. The tract at residues 2 to 115 is head; sequence SKRRVAADLP…HTTVEDLGGC (114 aa). A phosphoserine mark is found at Ser-27, Ser-33, Ser-36, and Ser-91. The span at 28-48 shows a compositional bias: polar residues; the sequence is LRGTHSPSSLDSPPASRTSAV. An IF rod domain is found at 105-416; that stretch reads DHTTVEDLGG…HALLDREENN (312 aa). 3 coiled-coil regions span residues 116–146, 170–249, and 308–402; these read LVEY…SKAK, LENA…VKVL, and QTQE…LQKD. Residues 397-416 are tail; sequence SQLQKDVASYHALLDREENN.

Belongs to the intermediate filament family. In terms of assembly, part of a complex required for lens intermediate filament formation composed of BFSP1, BFSP2 and CRYAA. Found in a complex composed of PPL (via C-terminal linker domain), BFSP1 and BFSP2 in the retinal lens. Within the complex interacts with PPL (via C-terminal linker domain) and with BFSP1. Identified in a complex that contains VIM, EZR, AHNAK, BFSP1, BFSP2, ANK2, PLEC, PRX and spectrin. Interacts with LGSN. Interacts with VIM. In terms of tissue distribution, detected in retina lens fiber cells (at protein level). Also expressed in the lens epithelium, abundantly expressed in the anterior and anterolateral epithelium, less frequently expressed nearer the lens coronal equator (at protein level).

Its subcellular location is the cell membrane. It is found in the cytoplasm. The protein localises to the cytoskeleton. It localises to the cell cortex. Required for the correct formation of lens intermediate filaments as part of a complex composed of BFSP1, BFSP2 and CRYAA. Plays a role in maintenance of retinal lens optical clarity. This Mus musculus (Mouse) protein is Phakinin (Bfsp2).